An 80-amino-acid polypeptide reads, in one-letter code: MTNTKILEDNISFEEALKELEEIVKKIDNGQESLETAVNSFERGIVLKNHCEKKLKEARLKIEKITKLADSTVVLEETEI.

The protein belongs to the XseB family. As to quaternary structure, heterooligomer composed of large and small subunits.

It is found in the cytoplasm. The catalysed reaction is Exonucleolytic cleavage in either 5'- to 3'- or 3'- to 5'-direction to yield nucleoside 5'-phosphates.. In terms of biological role, bidirectionally degrades single-stranded DNA into large acid-insoluble oligonucleotides, which are then degraded further into small acid-soluble oligonucleotides. This Rickettsia canadensis (strain McKiel) protein is Exodeoxyribonuclease 7 small subunit.